Reading from the N-terminus, the 207-residue chain is dTTP/UTP pyrophosphatase (207 aa).

Asp-68 functions as the Proton acceptor in the catalytic mechanism.

Belongs to the Maf family. YhdE subfamily. It depends on a divalent metal cation as a cofactor.

It is found in the cytoplasm. The enzyme catalyses dTTP + H2O = dTMP + diphosphate + H(+). It carries out the reaction UTP + H2O = UMP + diphosphate + H(+). Functionally, nucleoside triphosphate pyrophosphatase that hydrolyzes dTTP and UTP. May have a dual role in cell division arrest and in preventing the incorporation of modified nucleotides into cellular nucleic acids. This chain is dTTP/UTP pyrophosphatase, found in Staphylothermus marinus (strain ATCC 43588 / DSM 3639 / JCM 9404 / F1).